Here is a 542-residue protein sequence, read N- to C-terminus: Hydroxylamine reductase (542 aa).

The [4Fe-4S] cluster site is built by cysteine 3, cysteine 6, cysteine 15, and cysteine 21. Hybrid [4Fe-2O-2S] cluster-binding residues include histidine 238, glutamate 262, cysteine 307, cysteine 398, cysteine 426, cysteine 451, glutamate 485, and lysine 487. Position 398 is a cysteine persulfide (cysteine 398).

Belongs to the HCP family. Requires [4Fe-4S] cluster as cofactor. The cofactor is hybrid [4Fe-2O-2S] cluster.

It localises to the cytoplasm. It carries out the reaction A + NH4(+) + H2O = hydroxylamine + AH2 + H(+). Catalyzes the reduction of hydroxylamine to form NH(3) and H(2)O. This chain is Hydroxylamine reductase, found in Microcystis aeruginosa (strain NIES-843 / IAM M-2473).